Here is a 241-residue protein sequence, read N- to C-terminus: PRA1 family protein H (241 aa).

The next 3 membrane-spanning stretches (helical) occupy residues Leu-142–Leu-162, Leu-189–Leu-205, and Met-209–Phe-228.

It belongs to the PRA1 family.

It localises to the endoplasmic reticulum membrane. May be involved in both secretory and endocytic intracellular trafficking in the endosomal/prevacuolar compartments. This Arabidopsis thaliana (Mouse-ear cress) protein is PRA1 family protein H (PRA1H).